The chain runs to 146 residues: Small ribosomal subunit protein uS9x (146 aa).

Belongs to the universal ribosomal protein uS9 family.

The protein resides in the cytoplasm. The sequence is that of Small ribosomal subunit protein uS9x (RPS16C) from Arabidopsis thaliana (Mouse-ear cress).